We begin with the raw amino-acid sequence, 129 residues long: Large ribosomal subunit protein bL12 (129 aa).

Belongs to the bacterial ribosomal protein bL12 family. Homodimer. Part of the ribosomal stalk of the 50S ribosomal subunit. Forms a multimeric L10(L12)X complex, where L10 forms an elongated spine to which 2 to 4 L12 dimers bind in a sequential fashion. Binds GTP-bound translation factors.

Functionally, forms part of the ribosomal stalk which helps the ribosome interact with GTP-bound translation factors. Is thus essential for accurate translation. In Mycobacteroides abscessus (strain ATCC 19977 / DSM 44196 / CCUG 20993 / CIP 104536 / JCM 13569 / NCTC 13031 / TMC 1543 / L948) (Mycobacterium abscessus), this protein is Large ribosomal subunit protein bL12.